Reading from the N-terminus, the 708-residue chain is Ubiquitin thioesterase ZRANB1 (708 aa).

Residues 3–33 form a RanBP2-type 1 zinc finger; sequence ERGIKWACEYCTYENWPSAIKCTMCRAQRPS. Cys10, Cys13, Cys24, and Cys27 together coordinate Zn(2+). The tract at residues 38-73 is disordered; the sequence is TEDPFKSGSSDVGRDWDPSSTEGGSSPLICPDSSAR. 2 RanBP2-type zinc fingers span residues 84–113 and 149–178; these read NANKWSCHMCTYLNWPRAIRCTQCLSQRRT and RTQHWTCSICTYENWAKAKKCVVCDHPRPN. Cys90, Cys93, Cys104, Cys107, Cys155, Cys158, Cys169, and Cys172 together coordinate Zn(2+). Residues 200 to 223 are disordered; it reads RARWRGSCSSGNSQRRSPPTMKRD. Positions 206–216 are enriched in polar residues; the sequence is SCSSGNSQRRS. ANK repeat units follow at residues 260–290 and 313–340; these read KKTDWLFLNACVGVVEGDLAAIEAYKSSGGD and YTLVHLAIRFQRQDMLAILLTEVSQQAA. The OTU domain occupies 432–592; sequence LYALWNRTAG…RGHFSALVAM (161 aa). The Nucleophile role is filled by Cys443. His585 functions as the Proton acceptor in the catalytic mechanism.

Belongs to the peptidase C64 family. Interacts with TRAF6. Interacts with APC.

Its subcellular location is the cytoplasm. It is found in the nucleus. It carries out the reaction Thiol-dependent hydrolysis of ester, thioester, amide, peptide and isopeptide bonds formed by the C-terminal Gly of ubiquitin (a 76-residue protein attached to proteins as an intracellular targeting signal).. In terms of biological role, ubiquitin thioesterase, which specifically hydrolyzes 'Lys-29'-linked and 'Lys-33'-linked diubiquitin. Also cleaves 'Lys-63'-linked chains, but with 40-fold less efficiency compared to 'Lys-29'-linked ones. Positive regulator of the Wnt signaling pathway that deubiquitinates APC protein, a negative regulator of Wnt-mediated transcription. Acts as a regulator of autophagy by mediating deubiquitination of PIK3C3/VPS34, thereby promoting autophagosome maturation. Plays a role in the regulation of cell morphology and cytoskeletal organization. Required in the stress fiber dynamics and cell migration. The sequence is that of Ubiquitin thioesterase ZRANB1 from Bos taurus (Bovine).